The following is a 765-amino-acid chain: Probable ATP-dependent RNA helicase DDX27 (765 aa).

Residues S23, S25, and S48 each carry the phosphoserine modification. Acidic residues predominate over residues L43–T63. Disordered regions lie at residues L43 to A83 and K111 to D179. Positions F55–F57 match the Required for interaction with the PEBOW complex motif. The span at E129–D156 shows a compositional bias: basic and acidic residues. S135 and S146 each carry phosphoserine. The segment covering T157 to E172 has biased composition (acidic residues). Positions K164 to K169 match the Nuclear localization signal motif. A Q motif motif is present at residues L187 to K215. The 175-residue stretch at I218–I392 folds into the Helicase ATP-binding domain. A231–T238 provides a ligand contact to ATP. Positions D340–D343 match the DEAD box motif. In terms of domain architecture, Helicase C-terminal spans L426–I572. Residues V716 to S725 are compositionally biased toward basic residues.

The protein belongs to the DEAD box helicase family. DDX27/DRS1 subfamily. In terms of assembly, associates with PeBoW complex, composed of BOP1, PES1 and WDR12. Interacts directly with BOP1 and PES1.

It localises to the nucleus. It is found in the nucleolus. The protein localises to the chromosome. The enzyme catalyses ATP + H2O = ADP + phosphate + H(+). In terms of biological role, probable ATP-dependent RNA helicase. Component of the nucleolar ribosomal RNA (rRNA) processing machinery that regulates 3' end formation of ribosomal 47S rRNA. The polypeptide is Probable ATP-dependent RNA helicase DDX27 (DDX27) (Homo sapiens (Human)).